Reading from the N-terminus, the 297-residue chain is Phosphoribosylaminoimidazole-succinocarboxamide synthase (297 aa).

This sequence belongs to the SAICAR synthetase family.

The catalysed reaction is 5-amino-1-(5-phospho-D-ribosyl)imidazole-4-carboxylate + L-aspartate + ATP = (2S)-2-[5-amino-1-(5-phospho-beta-D-ribosyl)imidazole-4-carboxamido]succinate + ADP + phosphate + 2 H(+). It participates in purine metabolism; IMP biosynthesis via de novo pathway; 5-amino-1-(5-phospho-D-ribosyl)imidazole-4-carboxamide from 5-amino-1-(5-phospho-D-ribosyl)imidazole-4-carboxylate: step 1/2. The sequence is that of Phosphoribosylaminoimidazole-succinocarboxamide synthase from Mycobacterium marinum (strain ATCC BAA-535 / M).